A 144-amino-acid polypeptide reads, in one-letter code: Large ribosomal subunit protein uL15 (144 aa).

The segment covering 1–10 has biased composition (basic and acidic residues); it reads MKLHELKPAE. A disordered region spans residues 1 to 52; the sequence is MKLHELKPAEGSRQVRNRVGRGTSSGNGKTAGRGQKGQKARGKVRLGFEGGQ. Residues 23 to 35 are compositionally biased toward gly residues; it reads TSSGNGKTAGRGQ.

This sequence belongs to the universal ribosomal protein uL15 family. In terms of assembly, part of the 50S ribosomal subunit.

Binds to the 23S rRNA. The sequence is that of Large ribosomal subunit protein uL15 from Ligilactobacillus salivarius (strain UCC118) (Lactobacillus salivarius).